The sequence spans 530 residues: Phosphoenolpyruvate carboxykinase (ATP) (530 aa).

The substrate site is built by arginine 57, tyrosine 193, and lysine 199. Residues lysine 199, histidine 218, and glycine 234–threonine 242 contribute to the ATP site. Mn(2+)-binding residues include lysine 199 and histidine 218. Mn(2+) is bound at residue aspartate 255. ATP contacts are provided by glutamate 283, arginine 320, and threonine 445. Arginine 320 is a binding site for substrate.

It belongs to the phosphoenolpyruvate carboxykinase (ATP) family. It depends on Mn(2+) as a cofactor.

It localises to the cytoplasm. It catalyses the reaction oxaloacetate + ATP = phosphoenolpyruvate + ADP + CO2. It functions in the pathway carbohydrate biosynthesis; gluconeogenesis. In terms of biological role, involved in the gluconeogenesis. Catalyzes the conversion of oxaloacetate (OAA) to phosphoenolpyruvate (PEP) through direct phosphoryl transfer between the nucleoside triphosphate and OAA. The protein is Phosphoenolpyruvate carboxykinase (ATP) of Leptospira interrogans serogroup Icterohaemorrhagiae serovar copenhageni (strain Fiocruz L1-130).